Reading from the N-terminus, the 760-residue chain is Polyribonucleotide nucleotidyltransferase (760 aa).

2 residues coordinate Mg(2+): Asp492 and Asp498. Residues 559 to 618 enclose the KH domain; the sequence is PQHAEVFVNPDIIRIIIGPGGKNIKAITATTGASIDIEDSGRVSIFAPTLEAMEMAREMV. The S1 motif domain maps to 628–702; that stretch reads GKNYTGKVRK…SRKAVLLEEQ (75 aa). A disordered region spans residues 706–760; it reads WKPEDTARPSGPREGGRRDGGRDGRRDGGRDGRRDGGRDGGRRDGGRRDGGRDRN. Over residues 719–760 the composition is skewed to basic and acidic residues; that stretch reads EGGRRDGGRDGRRDGGRDGRRDGGRDGGRRDGGRRDGGRDRN.

This sequence belongs to the polyribonucleotide nucleotidyltransferase family. Mg(2+) serves as cofactor.

The protein resides in the cytoplasm. The catalysed reaction is RNA(n+1) + phosphate = RNA(n) + a ribonucleoside 5'-diphosphate. Its function is as follows. Involved in mRNA degradation. Catalyzes the phosphorolysis of single-stranded polyribonucleotides processively in the 3'- to 5'-direction. The polypeptide is Polyribonucleotide nucleotidyltransferase (Nitratidesulfovibrio vulgaris (strain ATCC 29579 / DSM 644 / CCUG 34227 / NCIMB 8303 / VKM B-1760 / Hildenborough) (Desulfovibrio vulgaris)).